The chain runs to 158 residues: NAD(P)H-quinone oxidoreductase subunit N (158 aa).

The protein belongs to the complex I NdhN subunit family. As to quaternary structure, NDH-1 can be composed of about 15 different subunits; different subcomplexes with different compositions have been identified which probably have different functions.

The protein localises to the cellular thylakoid membrane. The catalysed reaction is a plastoquinone + NADH + (n+1) H(+)(in) = a plastoquinol + NAD(+) + n H(+)(out). It catalyses the reaction a plastoquinone + NADPH + (n+1) H(+)(in) = a plastoquinol + NADP(+) + n H(+)(out). Its function is as follows. NDH-1 shuttles electrons from an unknown electron donor, via FMN and iron-sulfur (Fe-S) centers, to quinones in the respiratory and/or the photosynthetic chain. The immediate electron acceptor for the enzyme in this species is believed to be plastoquinone. Couples the redox reaction to proton translocation, and thus conserves the redox energy in a proton gradient. Cyanobacterial NDH-1 also plays a role in inorganic carbon-concentration. This Microcystis aeruginosa (strain NIES-843 / IAM M-2473) protein is NAD(P)H-quinone oxidoreductase subunit N.